An 811-amino-acid chain; its full sequence is Probable disease resistance protein At5g04720 (811 aa).

The 147-residue stretch at Met-1–Gly-147 folds into the RPW8 domain. NB-ARC domains follow at residues Val-180–Ser-242 and Thr-312–Val-437. Gly-207 to Thr-214 provides a ligand contact to ATP. LRR repeat units follow at residues Phe-650–Ile-674, Ser-676–Lys-699, Ala-700–Leu-722, Arg-724–Val-746, and Thr-748–Leu-769.

The protein belongs to the disease resistance NB-LRR family.

Its function is as follows. Probable disease resistance protein. The protein is Probable disease resistance protein At5g04720 of Arabidopsis thaliana (Mouse-ear cress).